A 91-amino-acid chain; its full sequence is Small ribosomal subunit protein uS19 (91 aa).

Belongs to the universal ribosomal protein uS19 family.

In terms of biological role, protein S19 forms a complex with S13 that binds strongly to the 16S ribosomal RNA. The chain is Small ribosomal subunit protein uS19 from Afipia carboxidovorans (strain ATCC 49405 / DSM 1227 / KCTC 32145 / OM5) (Oligotropha carboxidovorans).